The following is a 263-amino-acid chain: 4-hydroxy-tetrahydrodipicolinate reductase (263 aa).

NAD(+) is bound by residues 8 to 13 (GASGRM), aspartate 34, 99 to 101 (GTT), and 125 to 128 (SPNY). The active-site Proton donor/acceptor is the histidine 157. Histidine 158 is a (S)-2,3,4,5-tetrahydrodipicolinate binding site. Lysine 161 serves as the catalytic Proton donor. Residue 167-168 (GT) participates in (S)-2,3,4,5-tetrahydrodipicolinate binding.

It belongs to the DapB family.

The protein resides in the cytoplasm. The catalysed reaction is (S)-2,3,4,5-tetrahydrodipicolinate + NAD(+) + H2O = (2S,4S)-4-hydroxy-2,3,4,5-tetrahydrodipicolinate + NADH + H(+). It catalyses the reaction (S)-2,3,4,5-tetrahydrodipicolinate + NADP(+) + H2O = (2S,4S)-4-hydroxy-2,3,4,5-tetrahydrodipicolinate + NADPH + H(+). Its pathway is amino-acid biosynthesis; L-lysine biosynthesis via DAP pathway; (S)-tetrahydrodipicolinate from L-aspartate: step 4/4. Its function is as follows. Catalyzes the conversion of 4-hydroxy-tetrahydrodipicolinate (HTPA) to tetrahydrodipicolinate. This chain is 4-hydroxy-tetrahydrodipicolinate reductase, found in Methanococcoides burtonii (strain DSM 6242 / NBRC 107633 / OCM 468 / ACE-M).